We begin with the raw amino-acid sequence, 559 residues long: Formate--tetrahydrofolate ligase (559 aa).

68 to 75 (TPAGEGKT) is an ATP binding site.

Belongs to the formate--tetrahydrofolate ligase family.

It catalyses the reaction (6S)-5,6,7,8-tetrahydrofolate + formate + ATP = (6R)-10-formyltetrahydrofolate + ADP + phosphate. The protein operates within one-carbon metabolism; tetrahydrofolate interconversion. In Mesorhizobium japonicum (strain LMG 29417 / CECT 9101 / MAFF 303099) (Mesorhizobium loti (strain MAFF 303099)), this protein is Formate--tetrahydrofolate ligase.